The following is a 326-amino-acid chain: Type II methyltransferase M.EcoRI (326 aa).

Belongs to the N(4)/N(6)-methyltransferase family. In terms of assembly, monomer.

The catalysed reaction is a 2'-deoxyadenosine in DNA + S-adenosyl-L-methionine = an N(6)-methyl-2'-deoxyadenosine in DNA + S-adenosyl-L-homocysteine + H(+). A methylase that recognizes the double-stranded sequence 5'-GAATTC-3', methylates A-3 on both strands, and protects the DNA from cleavage by the EcoRI endonuclease. The protein is Type II methyltransferase M.EcoRI (ecoRIM) of Escherichia coli.